The primary structure comprises 199 residues: Small ribosomal subunit protein eS1 (199 aa).

Belongs to the eukaryotic ribosomal protein eS1 family.

This is Small ribosomal subunit protein eS1 from Pyrococcus abyssi (strain GE5 / Orsay).